The following is a 109-amino-acid chain: MFKGGMGNIMKQAQQMQERMQKVQDDLANLEVTGEAGAGMVKVTMTCNHNVRRVNIDESLMDDDKDMVEDLVAAAFNDAVRRVQETSKEKMGDVTGGMPLPPGFKMPGF.

Residues 86–109 (TSKEKMGDVTGGMPLPPGFKMPGF) form a disordered region. The segment covering 99–109 (PLPPGFKMPGF) has biased composition (pro residues).

This sequence belongs to the YbaB/EbfC family. As to quaternary structure, homodimer.

The protein localises to the cytoplasm. It localises to the nucleoid. Functionally, binds to DNA and alters its conformation. May be involved in regulation of gene expression, nucleoid organization and DNA protection. This Alteromonas mediterranea (strain DSM 17117 / CIP 110805 / LMG 28347 / Deep ecotype) protein is Nucleoid-associated protein MADE_1013280.